A 68-amino-acid chain; its full sequence is Protein transport protein Sec61 subunit gamma (68 aa).

An N-acetylmethionine modification is found at M1. Residues 1–32 (MDQVMQFVEPSRQFVKDSIRLVKRCTKPDRKE) lie on the Cytoplasmic side of the membrane. Residue S18 is modified to Phosphoserine. A helical membrane pass occupies residues 33–61 (FQKIAMATAIGFAIMGFIGFFVKLIHIPI). Over 62-68 (NNIIVGG) the chain is Extracellular.

It belongs to the SecE/SEC61-gamma family. As to quaternary structure, the SEC61 channel-forming translocon complex consists of channel-forming core components SEC61A1, SEC61B and SEC61G and different auxiliary components such as SEC62 and SEC63. The SEC61 channel associates with the multi-pass translocon (MPT) complex.

It is found in the endoplasmic reticulum membrane. In terms of biological role, component of SEC61 channel-forming translocon complex that mediates transport of signal peptide-containing precursor polypeptides across the endoplasmic reticulum (ER). Forms a ribosome receptor and a gated pore in the ER membrane, both functions required for cotranslational translocation of nascent polypeptides. The SEC61 channel is also involved in ER membrane insertion of transmembrane proteins: it mediates membrane insertion of the first few transmembrane segments of proteins, while insertion of subsequent transmembrane regions of multi-pass membrane proteins is mediated by the multi-pass translocon (MPT) complex. The SEC61 channel cooperates with the translocating protein TRAM1 to import nascent proteins into the ER. The polypeptide is Protein transport protein Sec61 subunit gamma (SEC61G) (Bos taurus (Bovine)).